Reading from the N-terminus, the 180-residue chain is Translation initiation factor IF-3 (180 aa).

Belongs to the IF-3 family. Monomer.

Its subcellular location is the cytoplasm. In terms of biological role, IF-3 binds to the 30S ribosomal subunit and shifts the equilibrium between 70S ribosomes and their 50S and 30S subunits in favor of the free subunits, thus enhancing the availability of 30S subunits on which protein synthesis initiation begins. This chain is Translation initiation factor IF-3, found in Escherichia coli (strain K12 / MC4100 / BW2952).